A 62-amino-acid polypeptide reads, in one-letter code: Sperm protamine P1 (62 aa).

A disordered region spans residues 1–62 (MARYRRHSRS…RRYSRRGRRR (62 aa)).

The protein belongs to the protamine P1 family. As to expression, testis.

It localises to the nucleus. The protein localises to the chromosome. Its function is as follows. Protamines substitute for histones in the chromatin of sperm during the haploid phase of spermatogenesis. They compact sperm DNA into a highly condensed, stable and inactive complex. In Pseudantechinus bilarni (Sandstone dibbler), this protein is Sperm protamine P1 (PRM1).